The primary structure comprises 455 residues: Tyramine receptor Ser-2 (455 aa).

Over 1–60 (MFRNYTDSVQEMVLRAIDSIRDSVINASSAVSTTTLPPLDIPMTSMKPPSIIPTVELVLG) the chain is Extracellular. N-linked (GlcNAc...) asparagine glycosylation is found at Asn-4 and Asn-26. Residues 61–83 (TITYLVIIAMTVVGNTLVVVAVF) form a helical membrane-spanning segment. At 84–93 (SYRPLKKVQN) the chain is on the cytoplasmic side. Residues 94 to 115 (YFLVSLAASDLAVAIFVMPLHV) form a helical membrane-spanning segment. At 116 to 133 (VTFLAGGKWLLGVTVCQF) the chain is on the extracellular side. A disulfide bond links Cys-131 and Cys-209. A helical membrane pass occupies residues 134 to 154 (FTTADILLCTSSILNLCAIAL). Residues 155–174 (DRYWAIHNPINYAQKRTTKF) are Cytoplasmic-facing. The helical transmembrane segment at 175–197 (VCIVIVIVWILSMLISVPPIIGW) threads the bilayer. Residues 198 to 221 (NNWQENMMEDSCGLSTEKAFVVFS) are Extracellular-facing. Residues 222 to 243 (AAGSFFLPLLVMVVVYVKIFIS) traverse the membrane as a helical segment. The Cytoplasmic segment spans residues 244–370 (ARQRIRTNRG…VAKEKRAAKT (127 aa)). Residues 371-392 (IAVIIFVFSFCWLPFFVAYVIR) form a helical membrane-spanning segment. Over 393–407 (PFCETCKLHAKVEQA) the chain is Extracellular. The helical transmembrane segment at 408–428 (FTWLGYINSSLNPFLYGILNL) threads the bilayer. At 429–455 (EFRRAFKKILCPKAVLEQRRRRMSAQP) the chain is on the cytoplasmic side.

Belongs to the G-protein coupled receptor 1 family. The different isoforms are expressed in specific, but overlapping sets of sensory, inter- and motor neurons, including AIY, AIZ and RIA interneurons. They are also expressed in pharyngeal cells, head muscles and excretory gland cells.

It localises to the cell membrane. G-protein coupled receptor for tyramine, a known neurotransmitter and neuromodulator and direct precursor of octopamine. The rank order of potency is tyramine &gt; octopamine &gt; dopamine &gt; serotonin &gt; epinephrine = norepinephrine. The sequence is that of Tyramine receptor Ser-2 (ser-2) from Caenorhabditis elegans.